A 156-amino-acid polypeptide reads, in one-letter code: Ribosomal RNA large subunit methyltransferase H (156 aa).

S-adenosyl-L-methionine contacts are provided by residues L73, G104, and 123 to 128 (LSSLTL).

It belongs to the RNA methyltransferase RlmH family. As to quaternary structure, homodimer.

The protein resides in the cytoplasm. It catalyses the reaction pseudouridine(1915) in 23S rRNA + S-adenosyl-L-methionine = N(3)-methylpseudouridine(1915) in 23S rRNA + S-adenosyl-L-homocysteine + H(+). In terms of biological role, specifically methylates the pseudouridine at position 1915 (m3Psi1915) in 23S rRNA. The protein is Ribosomal RNA large subunit methyltransferase H of Bordetella petrii (strain ATCC BAA-461 / DSM 12804 / CCUG 43448).